We begin with the raw amino-acid sequence, 434 residues long: Methylenetetrahydrofolate--tRNA-(uracil-5-)-methyltransferase TrmFO (434 aa).

10–15 serves as a coordination point for FAD; the sequence is GAGLAG.

Belongs to the MnmG family. TrmFO subfamily. The cofactor is FAD.

Its subcellular location is the cytoplasm. It catalyses the reaction uridine(54) in tRNA + (6R)-5,10-methylene-5,6,7,8-tetrahydrofolate + NADH + H(+) = 5-methyluridine(54) in tRNA + (6S)-5,6,7,8-tetrahydrofolate + NAD(+). The catalysed reaction is uridine(54) in tRNA + (6R)-5,10-methylene-5,6,7,8-tetrahydrofolate + NADPH + H(+) = 5-methyluridine(54) in tRNA + (6S)-5,6,7,8-tetrahydrofolate + NADP(+). Its function is as follows. Catalyzes the folate-dependent formation of 5-methyl-uridine at position 54 (M-5-U54) in all tRNAs. The chain is Methylenetetrahydrofolate--tRNA-(uracil-5-)-methyltransferase TrmFO from Bacillus anthracis (strain A0248).